Here is a 501-residue protein sequence, read N- to C-terminus: Probable malate:quinone oxidoreductase (501 aa).

Belongs to the MQO family. Requires FAD as cofactor.

The enzyme catalyses (S)-malate + a quinone = a quinol + oxaloacetate. Its pathway is carbohydrate metabolism; tricarboxylic acid cycle; oxaloacetate from (S)-malate (quinone route): step 1/1. This is Probable malate:quinone oxidoreductase from Mycolicibacterium paratuberculosis (strain ATCC BAA-968 / K-10) (Mycobacterium paratuberculosis).